The following is a 750-amino-acid chain: Xylosyl- and glucuronyltransferase LARGE2s (750 aa).

At 1 to 10 the chain is on the cytoplasmic side; the sequence is MLCPCRGKLK. A helical; Signal-anchor for type II membrane protein membrane pass occupies residues 11–31; it reads LLVVSLSFVILFTWLYLLVGN. At 32 to 750 the chain is on the lumenal side; sequence SENGRSLLLS…LKYLTAQRNI (719 aa). N-linked (GlcNAc...) asparagine glycans are attached at residues N116, N142, and N228. Residues 132 to 407 form a xylosyltransferase activity region; it reads LHVACVCAGH…FLEYDGNLLR (276 aa). Positions 236 and 238 each coordinate Mn(2+). N266 is a glycosylation site (N-linked (GlcNAc...) asparagine). The interval 408-750 is glucuronyltransferase activity; it reads RELFGCPSQA…LKYLTAQRNI (343 aa). D557 and D559 together coordinate Mn(2+).

This sequence in the C-terminal section; belongs to the glycosyltransferase 49 family. In the N-terminal section; belongs to the glycosyltransferase 8 family. Mn(2+) is required as a cofactor.

It localises to the golgi apparatus membrane. The enzyme catalyses 3-O-[beta-D-GlcA-(1-&gt;3)-beta-D-Xyl-(1-&gt;4)-Rib-ol-P-Rib-ol-P-3-beta-D-GalNAc-(1-&gt;3)-beta-D-GlcNAc-(1-&gt;4)-(O-6-P-alpha-D-Man)]-Thr-[protein] + UDP-alpha-D-xylose = 3-O-[alpha-D-Xyl-(1-&gt;3)-beta-D-GlcA-(1-&gt;4)-beta-D-Xyl-(1-&gt;4)-Rib-ol-P-Rib-ol-P-3-beta-D-GalNAc-(1-&gt;3)-beta-D-GlcNAc-(1-&gt;4)-(O-6-P-alpha-D-Man)]-Thr-[protein] + UDP + H(+). It catalyses the reaction 3-O-{(1-&gt;[3)-alpha-D-Xyl-(1-&gt;3)-beta-D-GlcA-(1-&gt;](n)-4)-beta-D-Xyl-(1-&gt;4)-Rib-ol-P-Rib-ol-P-3-beta-D-GalNAc-(1-&gt;3)-beta-D-GlcNAc-(1-&gt;4)-O-6-P-alpha-D-Man}-L-Thr-[protein] + UDP-alpha-D-glucuronate = 3-O-{beta-D-GlcA-(1-&gt;[3)-alpha-D-Xyl-(1-&gt;3)-beta-D-GlcA-(1-&gt;](n)-4)-beta-D-Xyl-(1-&gt;4)-Rib-ol-P-Rib-ol-P-3-beta-D-GalNAc-(1-&gt;3)-beta-D-GlcNAc-(1-&gt;4)-O-6-P-alpha-D-Man}-L-Thr-[protein] + UDP + H(+). The catalysed reaction is 3-O-{beta-D-GlcA-(1-&gt;[3)-alpha-D-Xyl-(1-&gt;3)-beta-D-GlcA-(1-&gt;](n)-4)-beta-D-Xyl-(1-&gt;4)-Rib-ol-P-Rib-ol-P-3-beta-D-GalNAc-(1-&gt;3)-beta-D-GlcNAc-(1-&gt;4)-O-6-P-alpha-D-Man}-L-Thr-[protein] + UDP-alpha-D-xylose = 3-O-{(1-&gt;[3)-alpha-D-Xyl-(1-&gt;3)-beta-D-GlcA-(1-&gt;](n+1)-4)-beta-D-Xyl-(1-&gt;4)-Rib-ol-P-Rib-ol-P-3-beta-D-GalNAc-(1-&gt;3)-beta-D-GlcNAc-(1-&gt;4)-O-6-P-alpha-D-Man}-L-Thr-[protein] + UDP + H(+). The protein operates within protein modification; protein glycosylation. Its function is as follows. Bifunctional glycosyltransferase with both alpha-1,3-xylosyltransferase and beta-1,3-glucuronyltransferase activities involved in the maturation of alpha-dystroglycan (DAG1) by glycosylation leading to DAG1 binding to laminin G-like domain-containing extracellular proteins with high affinity and in a phosphorylated-O-mannosyl trisaccharide dependent manner. Elongates the glucuronyl-beta-1,4-xylose-beta disaccharide primer structure by adding repeating units [-3-Xylose-alpha-1,3-GlcA-beta-1-] to produce a heteropolysaccharide. Supports the maturation of DAG1 more effectively than LARGE1. In addition, can modify both heparan sulfate (HS)- and chondroitin/dermatan sulfate (CS/DS)-proteoglycans (PGs), namely GPC4, with a glycosaminoglycan (GAG)-like polysaccharide composed of xylose and glucuronic acid to confer laminin binding. The protein is Xylosyl- and glucuronyltransferase LARGE2s of Danio rerio (Zebrafish).